The sequence spans 122 residues: Large ribosomal subunit protein uL14 (122 aa).

It belongs to the universal ribosomal protein uL14 family. Part of the 50S ribosomal subunit. Forms a cluster with proteins L3 and L19. In the 70S ribosome, L14 and L19 interact and together make contacts with the 16S rRNA in bridges B5 and B8.

Functionally, binds to 23S rRNA. Forms part of two intersubunit bridges in the 70S ribosome. The chain is Large ribosomal subunit protein uL14 from Rhizobium etli (strain CIAT 652).